Consider the following 151-residue polypeptide: Transcription antitermination protein NusB (151 aa).

The protein belongs to the NusB family.

In terms of biological role, involved in transcription antitermination. Required for transcription of ribosomal RNA (rRNA) genes. Binds specifically to the boxA antiterminator sequence of the ribosomal RNA (rrn) operons. The protein is Transcription antitermination protein NusB of Hamiltonella defensa subsp. Acyrthosiphon pisum (strain 5AT).